The sequence spans 469 residues: Phosphatidylinositol 4-kinase type 2-beta (469 aa).

A disordered region spans residues 1–84 (MAEACEPTRP…LDRTRTTSSE (84 aa)). At Ser-37 the chain carries Phosphoserine. Positions 108–439 (GVFPERISQG…AQMPCVIVEC (332 aa)) constitute a PI3K/PI4K catalytic domain. Positions 114–120 (ISQGSSG) are G-loop. Residues Ser-121 and Lys-136 each coordinate ATP. The interval 141-143 (EPY) is important for substrate binding. The interval 149-162 (KWTKYVHKVCCPCC) is important for interaction with membranes. Residues 245-248 (QLFV) and 259-260 (RR) each bind ATP. Residues 252–260 (KEAEYWLRR) are important for interaction with membranes. The interval 289–297 (RNTDRGNDN) is catalytic loop. The tract at residues 330–350 (AIDNGLAFPFKHPDEWRAYPF) is activation loop. Asp-332 contributes to the ATP binding site. The segment at 345–354 (WRAYPFHWAW) is important for interaction with membranes.

Belongs to the PI3/PI4-kinase family. Type II PI4K subfamily.

The protein resides in the cytoplasm. It is found in the cytosol. The protein localises to the golgi apparatus membrane. It localises to the endoplasmic reticulum membrane. Its subcellular location is the cell membrane. The protein resides in the early endosome membrane. The catalysed reaction is a 1,2-diacyl-sn-glycero-3-phospho-(1D-myo-inositol) + ATP = a 1,2-diacyl-sn-glycero-3-phospho-(1D-myo-inositol 4-phosphate) + ADP + H(+). In terms of biological role, together with PI4K2A and the type III PI4Ks (PIK4CA and PIK4CB) it contributes to the overall PI4-kinase activity of the cell. This contribution may be especially significant in plasma membrane, endosomal and Golgi compartments. The phosphorylation of phosphatidylinositol (PI) to PI4P is the first committed step in the generation of phosphatidylinositol 4,5-bisphosphate (PIP2), a precursor of the second messenger inositol 1,4,5-trisphosphate (InsP3). Contributes to the production of InsP3 in stimulated cells and is likely to be involved in the regulation of vesicular trafficking. The sequence is that of Phosphatidylinositol 4-kinase type 2-beta (Pi4k2b) from Mus musculus (Mouse).